Here is a 242-residue protein sequence, read N- to C-terminus: Probable septum site-determining protein MinC (242 aa).

It belongs to the MinC family. As to quaternary structure, interacts with MinD and FtsZ.

Functionally, cell division inhibitor that blocks the formation of polar Z ring septums. Rapidly oscillates between the poles of the cell to destabilize FtsZ filaments that have formed before they mature into polar Z rings. Prevents FtsZ polymerization. The protein is Probable septum site-determining protein MinC of Buchnera aphidicola subsp. Schizaphis graminum (strain Sg).